A 252-amino-acid chain; its full sequence is Probable phosphatase Shewana3_2794 (252 aa).

Positions 8, 10, 16, 41, 74, 102, 132, 193, and 195 each coordinate Zn(2+).

This sequence belongs to the PHP family. Zn(2+) serves as cofactor.

The polypeptide is Probable phosphatase Shewana3_2794 (Shewanella sp. (strain ANA-3)).